Consider the following 292-residue polypeptide: tRNA-cytidine(32) 2-sulfurtransferase (292 aa).

Positions 53–58 (SGGKDS) match the PP-loop motif motif. The [4Fe-4S] cluster site is built by Cys128, Cys131, and Cys219.

The protein belongs to the TtcA family. As to quaternary structure, homodimer. Requires Mg(2+) as cofactor. It depends on [4Fe-4S] cluster as a cofactor.

The protein resides in the cytoplasm. It catalyses the reaction cytidine(32) in tRNA + S-sulfanyl-L-cysteinyl-[cysteine desulfurase] + AH2 + ATP = 2-thiocytidine(32) in tRNA + L-cysteinyl-[cysteine desulfurase] + A + AMP + diphosphate + H(+). Its pathway is tRNA modification. In terms of biological role, catalyzes the ATP-dependent 2-thiolation of cytidine in position 32 of tRNA, to form 2-thiocytidine (s(2)C32). The sulfur atoms are provided by the cysteine/cysteine desulfurase (IscS) system. The polypeptide is tRNA-cytidine(32) 2-sulfurtransferase (Cereibacter sphaeroides (strain ATCC 17029 / ATH 2.4.9) (Rhodobacter sphaeroides)).